The following is a 265-amino-acid chain: Cytochrome c oxidase subunit 3 (265 aa).

7 consecutive transmembrane segments (helical) span residues 16 to 36 (PWPLLGSLGALASTIGGVMYM), 41 to 61 (GGGTLLCLGLGMILYTMFVWW), 85 to 105 (GIILFIVSEVMFFLAFFWAFF), 138 to 158 (LILLSSGAAVTWAHHAILAGL), 162 to 182 (AVYALIATVFLALVFTGFQGI), 200 to 220 (FFLATGFHGFHVIIGTIFLII), and 242 to 262 (AFYWHFVDVVWLFLFVSIYWW).

Belongs to the cytochrome c oxidase subunit 3 family. Component of the cytochrome c oxidase (complex IV, CIV), a multisubunit enzyme composed of a catalytic core of 3 subunits and several supernumerary subunits. The complex exists as a monomer or a dimer and forms supercomplexes (SCs) in the inner mitochondrial membrane with ubiquinol-cytochrome c oxidoreductase (cytochrome b-c1 complex, complex III, CIII).

The protein resides in the mitochondrion inner membrane. It carries out the reaction 4 Fe(II)-[cytochrome c] + O2 + 8 H(+)(in) = 4 Fe(III)-[cytochrome c] + 2 H2O + 4 H(+)(out). Its function is as follows. Component of the cytochrome c oxidase, the last enzyme in the mitochondrial electron transport chain which drives oxidative phosphorylation. The respiratory chain contains 3 multisubunit complexes succinate dehydrogenase (complex II, CII), ubiquinol-cytochrome c oxidoreductase (cytochrome b-c1 complex, complex III, CIII) and cytochrome c oxidase (complex IV, CIV), that cooperate to transfer electrons derived from NADH and succinate to molecular oxygen, creating an electrochemical gradient over the inner membrane that drives transmembrane transport and the ATP synthase. Cytochrome c oxidase is the component of the respiratory chain that catalyzes the reduction of oxygen to water. Electrons originating from reduced cytochrome c in the intermembrane space (IMS) are transferred via the dinuclear copper A center (CU(A)) of subunit 2 and heme A of subunit 1 to the active site in subunit 1, a binuclear center (BNC) formed by heme A3 and copper B (CU(B)). The BNC reduces molecular oxygen to 2 water molecules using 4 electrons from cytochrome c in the IMS and 4 protons from the mitochondrial matrix. The protein is Cytochrome c oxidase subunit 3 (COX3) of Marchantia polymorpha (Common liverwort).